Reading from the N-terminus, the 142-residue chain is UPF0102 protein Bamb_0202 (142 aa).

Residues 1–23 (MCHAAPAAPASGRGLPHGGGNFS) are disordered.

Belongs to the UPF0102 family.

The chain is UPF0102 protein Bamb_0202 from Burkholderia ambifaria (strain ATCC BAA-244 / DSM 16087 / CCUG 44356 / LMG 19182 / AMMD) (Burkholderia cepacia (strain AMMD)).